We begin with the raw amino-acid sequence, 1211 residues long: A disintegrin and metalloproteinase with thrombospondin motifs 2 (1211 aa).

An N-terminal signal peptide occupies residues 1–29 (MDPPAGAARRLLCPALLLLLLLLPPPLLP). A propeptide spanning residues 30-253 (PPPPPANARL…GVLEEHANSS (224 aa)) is cleaved from the precursor. 2 N-linked (GlcNAc...) asparagine glycosylation sites follow: N112 and N251. Positions 266 to 470 (YNIEVLLGVD…HSYDCLLDDP (205 aa)) constitute a Peptidase M12B domain. 10 disulfide bridges follow: C343–C392, C386–C465, C425–C451, C492–C517, C503–C526, C512–C545, C539–C550, C573–C610, C577–C615, and C588–C600. H408 lines the Zn(2+) pocket. E409 is a catalytic residue. Zn(2+) contacts are provided by H412 and H418. One can recognise a Disintegrin domain in the interval 480–560 (QLPGLHYSMN…IWLTPDILKR (81 aa)). A TSP type-1 1 domain is found at 561-616 (DGSWGAWSPFGSCSRTCGTGVKFRTRQCDNPHPANGGRTCSGLAYDFQLCSRQDCP). Residues 691 to 693 (RGD) carry the Cell attachment site motif. The segment at 723-851 (KVVKGTFTRS…NVDDNNVLEE (129 aa)) is spacer. TSP type-1 domains are found at residues 854 to 912 (VVYE…NPQE), 914 to 971 (SQPV…RACS), and 975 to 1029 (CPGR…GPCP). Residues N949 and N993 are each glycosylated (N-linked (GlcNAc...) asparagine). 3 disulfide bridges follow: C987/C1023, C991/C1028, and C1002/C1012. N1031 carries N-linked (GlcNAc...) asparagine glycosylation. A PLAC domain is found at 1059–1097 (SKGHCQGDKSIFCRMEVLSRYCSIPGYNKLCCKSCNLYN). N-linked (GlcNAc...) asparagine glycans are attached at residues N1098, N1145, and N1150. The interval 1170–1191 (LEDEVQPPNLIPRRPSPYEKTR) is disordered.

May belong to a multimeric complex. Binds specifically to collagen type XIV. Zn(2+) serves as cofactor. In terms of processing, the precursor is cleaved by a furin endopeptidase. Post-translationally, glycosylated. Can be O-fucosylated by POFUT2 on a serine or a threonine residue found within the consensus sequence C1-X(2)-(S/T)-C2-G of the TSP type-1 repeat domains where C1 and C2 are the first and second cysteine residue of the repeat, respectively. Fucosylated repeats can then be further glycosylated by the addition of a beta-1,3-glucose residue by the glucosyltransferase, B3GALTL. Fucosylation mediates the efficient secretion of ADAMTS family members. Can also be C-glycosylated with one or two mannose molecules on tryptophan residues within the consensus sequence W-X-X-W of the TPRs, and N-glycosylated. These other glycosylations can also facilitate secretion. In terms of tissue distribution, expressed at high level in skin, bone, tendon and aorta and at low levels in thymus and brain.

Its subcellular location is the secreted. The protein localises to the extracellular space. It is found in the extracellular matrix. It carries out the reaction Cleaves the N-propeptide of collagen chain alpha1(I) at Pro-|-Gln and of alpha1(II) and alpha2(I) at Ala-|-Gln.. Functionally, cleaves the propeptides of type I and II collagen prior to fibril assembly. Does not act on type III collagen. Cleaves lysyl oxidase LOX at a site downstream of its propeptide cleavage site to produce a short LOX form with reduced collagen-binding activity. This Homo sapiens (Human) protein is A disintegrin and metalloproteinase with thrombospondin motifs 2 (ADAMTS2).